We begin with the raw amino-acid sequence, 260 residues long: Glutamate racemase (260 aa).

Residues 14–15 (DS) and 46–47 (YG) contribute to the substrate site. C77 functions as the Proton donor/acceptor in the catalytic mechanism. Position 78–79 (78–79 (NT)) interacts with substrate. Residue C188 is the Proton donor/acceptor of the active site. 189–190 (TH) contacts substrate.

It belongs to the aspartate/glutamate racemases family.

The catalysed reaction is L-glutamate = D-glutamate. The protein operates within cell wall biogenesis; peptidoglycan biosynthesis. Functionally, provides the (R)-glutamate required for cell wall biosynthesis. This Clostridium perfringens (strain 13 / Type A) protein is Glutamate racemase.